Reading from the N-terminus, the 486-residue chain is Cobyric acid synthase (486 aa).

The 188-residue stretch at 248–435 (VLNVVVPVLP…LHGLFESPAA (188 aa)) folds into the GATase cobBQ-type domain. Cys-329 (nucleophile) is an active-site residue. The active site involves His-427.

This sequence belongs to the CobB/CobQ family. CobQ subfamily.

It participates in cofactor biosynthesis; adenosylcobalamin biosynthesis. Functionally, catalyzes amidations at positions B, D, E, and G on adenosylcobyrinic A,C-diamide. NH(2) groups are provided by glutamine, and one molecule of ATP is hydrogenolyzed for each amidation. The protein is Cobyric acid synthase of Pseudomonas syringae pv. syringae (strain B728a).